The primary structure comprises 121 residues: Lysozyme (121 aa).

The C-type lysozyme domain occupies 1 to 121 (KTFTRCELVQ…NKPLPDISKC (121 aa)). Disulfide bonds link Cys-6-Cys-121, Cys-27-Cys-110, Cys-62-Cys-76, and Cys-72-Cys-90. Residues Glu-32 and Asp-50 contribute to the active site.

It belongs to the glycosyl hydrolase 22 family.

The enzyme catalyses Hydrolysis of (1-&gt;4)-beta-linkages between N-acetylmuramic acid and N-acetyl-D-glucosamine residues in a peptidoglycan and between N-acetyl-D-glucosamine residues in chitodextrins.. Functionally, lysozymes have primarily a bacteriolytic function; those in tissues and body fluids are associated with the monocyte-macrophage system and enhance the activity of immunoagents. This is Lysozyme from Galleria mellonella (Greater wax moth).